We begin with the raw amino-acid sequence, 88 residues long: Defensin-like protein 98 (88 aa).

The signal sequence occupies residues 1–29 (MGSLRVSTVVIAVVACLSILLISPTEVDG). Disulfide bonds link Cys33–Cys76, Cys40–Cys62, Cys46–Cys73, and Cys50–Cys75.

Belongs to the DEFL family.

The protein resides in the secreted. This Arabidopsis thaliana (Mouse-ear cress) protein is Defensin-like protein 98.